The primary structure comprises 257 residues: 3-methyl-2-oxobutanoate hydroxymethyltransferase (257 aa).

Asp-42 and Asp-86 together coordinate Mg(2+). Residues 42-43 (DS), Asp-86, and Lys-116 contribute to the 3-methyl-2-oxobutanoate site. A Mg(2+)-binding site is contributed by Glu-118. The Proton acceptor role is filled by Glu-185.

Belongs to the PanB family. As to quaternary structure, homodecamer; pentamer of dimers. Mg(2+) serves as cofactor.

Its subcellular location is the cytoplasm. It catalyses the reaction 3-methyl-2-oxobutanoate + (6R)-5,10-methylene-5,6,7,8-tetrahydrofolate + H2O = 2-dehydropantoate + (6S)-5,6,7,8-tetrahydrofolate. It functions in the pathway cofactor biosynthesis; (R)-pantothenate biosynthesis; (R)-pantoate from 3-methyl-2-oxobutanoate: step 1/2. Catalyzes the reversible reaction in which hydroxymethyl group from 5,10-methylenetetrahydrofolate is transferred onto alpha-ketoisovalerate to form ketopantoate. In Prochlorococcus marinus subsp. pastoris (strain CCMP1986 / NIES-2087 / MED4), this protein is 3-methyl-2-oxobutanoate hydroxymethyltransferase.